We begin with the raw amino-acid sequence, 218 residues long: Octanoyltransferase (218 aa).

The 187-residue stretch at 32-218 (GEAAEAIWLL…LRTFPQHFPD (187 aa)) folds into the BPL/LPL catalytic domain. Substrate is bound by residues 71–78 (RGGQYTYH), 151–153 (AIG), and 164–166 (GLS). Residue C182 is the Acyl-thioester intermediate of the active site.

It belongs to the LipB family.

The protein localises to the cytoplasm. The catalysed reaction is octanoyl-[ACP] + L-lysyl-[protein] = N(6)-octanoyl-L-lysyl-[protein] + holo-[ACP] + H(+). Its pathway is protein modification; protein lipoylation via endogenous pathway; protein N(6)-(lipoyl)lysine from octanoyl-[acyl-carrier-protein]: step 1/2. Catalyzes the transfer of endogenously produced octanoic acid from octanoyl-acyl-carrier-protein onto the lipoyl domains of lipoate-dependent enzymes. Lipoyl-ACP can also act as a substrate although octanoyl-ACP is likely to be the physiological substrate. In Cereibacter sphaeroides (strain ATCC 17023 / DSM 158 / JCM 6121 / CCUG 31486 / LMG 2827 / NBRC 12203 / NCIMB 8253 / ATH 2.4.1.) (Rhodobacter sphaeroides), this protein is Octanoyltransferase.